The chain runs to 158 residues: Probable flavodoxin 1 (158 aa).

The region spanning 4–144 is the Flavodoxin-like domain; the sequence is ALITYASMSG…SCRAFARGFL (141 aa).

Belongs to the flavodoxin family. FMN is required as a cofactor.

Its function is as follows. Low-potential electron donor to a number of redox enzymes. The sequence is that of Probable flavodoxin 1 (ykuN) from Bacillus subtilis (strain 168).